The primary structure comprises 344 residues: tRNA N6-adenosine threonylcarbamoyltransferase (344 aa).

Residues His112 and His116 each contribute to the Fe cation site. Residues 134–138, Asp167, Gly180, and Asn280 contribute to the substrate site; that span reads LASGG. Asp308 provides a ligand contact to Fe cation.

Belongs to the KAE1 / TsaD family. Fe(2+) is required as a cofactor.

It localises to the cytoplasm. The catalysed reaction is L-threonylcarbamoyladenylate + adenosine(37) in tRNA = N(6)-L-threonylcarbamoyladenosine(37) in tRNA + AMP + H(+). Its function is as follows. Required for the formation of a threonylcarbamoyl group on adenosine at position 37 (t(6)A37) in tRNAs that read codons beginning with adenine. Is involved in the transfer of the threonylcarbamoyl moiety of threonylcarbamoyl-AMP (TC-AMP) to the N6 group of A37, together with TsaE and TsaB. TsaD likely plays a direct catalytic role in this reaction. The sequence is that of tRNA N6-adenosine threonylcarbamoyltransferase from Rickettsia peacockii (strain Rustic).